A 300-amino-acid polypeptide reads, in one-letter code: uncharacterized protein (300 aa).

Over residues 1–19 the composition is skewed to basic and acidic residues; it reads MATKRAHPEDETHESKRAA. The segment at 1-20 is disordered; that stretch reads MATKRAHPEDETHESKRAAQ.

This is an uncharacterized protein from Orgyia pseudotsugata multicapsid polyhedrosis virus (OpMNPV).